A 345-amino-acid chain; its full sequence is UDP-N-acetylenolpyruvoylglucosamine reductase (345 aa).

Positions 15–218 (VDVYAEKVII…NTIIFLRYKK (204 aa)) constitute an FAD-binding PCMH-type domain. The active site involves Arg161. The Proton donor role is filled by Ser230. The active site involves Glu327.

This sequence belongs to the MurB family. The cofactor is FAD.

The protein resides in the cytoplasm. It carries out the reaction UDP-N-acetyl-alpha-D-muramate + NADP(+) = UDP-N-acetyl-3-O-(1-carboxyvinyl)-alpha-D-glucosamine + NADPH + H(+). It functions in the pathway cell wall biogenesis; peptidoglycan biosynthesis. In terms of biological role, cell wall formation. In Blochmanniella floridana, this protein is UDP-N-acetylenolpyruvoylglucosamine reductase.